The sequence spans 259 residues: Major cell-binding factor (259 aa).

A signal peptide spans 1 to 26 (MVFRKSLLKLAVFALGACVAFSNANA).

It belongs to the bacterial solute-binding protein 3 family.

Its subcellular location is the cell surface. In terms of biological role, common antigen and a major cell adherence molecule. Most probably involved, with PEB1C, in a binding-protein-dependent transport system for an amino acid. May be involved in binding to intestinal cells. The polypeptide is Major cell-binding factor (peb1A) (Campylobacter jejuni subsp. jejuni serotype O:23/36 (strain 81-176)).